We begin with the raw amino-acid sequence, 325 residues long: 5-dehydro-2-deoxygluconokinase (325 aa).

Belongs to the carbohydrate kinase PfkB family.

It carries out the reaction 5-dehydro-2-deoxy-D-gluconate + ATP = 6-phospho-5-dehydro-2-deoxy-D-gluconate + ADP + H(+). Its pathway is polyol metabolism; myo-inositol degradation into acetyl-CoA; acetyl-CoA from myo-inositol: step 5/7. In terms of biological role, catalyzes the phosphorylation of 5-dehydro-2-deoxy-D-gluconate (2-deoxy-5-keto-D-gluconate or DKG) to 6-phospho-5-dehydro-2-deoxy-D-gluconate (DKGP). This chain is 5-dehydro-2-deoxygluconokinase, found in Listeria innocua serovar 6a (strain ATCC BAA-680 / CLIP 11262).